A 340-amino-acid polypeptide reads, in one-letter code: MDFKKKPIKKKSITVAYFYEHLSSRLSIKLKKLNQVDEEKRKIYERDIHRPGLALAGFTNLFTYRRVQVFGNTETWFLNHLGTEERKQAFSNITRYKVPCIIVTNNNKLDPELVEMATEAGIPLYRTSHTTTKFIYLITDFLDDQFCHYQHYHGSMVDVYGVGMFITGRSGIGKSEVALDLIERGHRLVADDLVVITRKGESVLMASGTELVRHFMEIRGLGIIDVEAMFGIRAIRHQKRVEIVVELLEFEPGKEFDRTGLENKSVDILGVEVPLVQLPIYPGKNITVIAEVVALNYLLKHYGYDAAEEFDRRIQQQIATRATVNNPAQRAVEYFEHDFE.

Catalysis depends on residues His-153 and Lys-174. Residue 168-175 (GRSGIGKS) coordinates ATP. Position 175 (Ser-175) interacts with Mg(2+). Residue Asp-192 is the Proton acceptor; for phosphorylation activity. Proton donor; for dephosphorylation activity of the active site. An important for the catalytic mechanism of both phosphorylation and dephosphorylation region spans residues 216-225 (MEIRGLGIID). Glu-217 serves as a coordination point for Mg(2+). Residue Arg-258 is part of the active site. Residues 279–284 (PIYPGK) are important for the catalytic mechanism of dephosphorylation.

It belongs to the HPrK/P family. In terms of assembly, homohexamer. It depends on Mg(2+) as a cofactor.

It catalyses the reaction [HPr protein]-L-serine + ATP = [HPr protein]-O-phospho-L-serine + ADP + H(+). The enzyme catalyses [HPr protein]-O-phospho-L-serine + phosphate + H(+) = [HPr protein]-L-serine + diphosphate. Its function is as follows. Catalyzes the ATP- as well as the pyrophosphate-dependent phosphorylation of a specific serine residue in HPr, a phosphocarrier protein of the phosphoenolpyruvate-dependent sugar phosphotransferase system (PTS). HprK/P also catalyzes the pyrophosphate-producing, inorganic phosphate-dependent dephosphorylation (phosphorolysis) of seryl-phosphorylated HPr (P-Ser-HPr). The sequence is that of HPr kinase/phosphorylase from Chloroherpeton thalassium (strain ATCC 35110 / GB-78).